The primary structure comprises 567 residues: MIFGSRRRIRGRRGRSGPMTRGLSALSRAVAVAWRRSLQLRVVALTLGLSLAVILALGFVLTSQVTNRVLDIKVRAAIDQIERARTTVSGIVNGEETRSLDSSLQLARNTLTSKTDPASGAGLAGAFDAVLMVPGDGPRAASTAGPVDQVPNALRGFVKAGQAAYQYATVQTEGFSGPALIIGTPTLSRVANLELYLIFPLASEQATITLVRGTMATGGLVLLVLLAGIALLVSRQVVVPVRSASRIAERFAEGHLSERMPVRGEDDMARLAVSFNDMAESLSRQIAQLEEFGNLQRRFTSDVSHELRTPLTTVRMAADLIYDHSADLDPTLRRSTELMVSELDRFETLLNDLLEISRHDAGVAELSVEAVDLRTTVNNALGNVGHLAEEAGIELLVDLPAEQVIAEVDARRVERILRNLIANAIDHAEHKPVRIRMAADEDTVAVTVRDYGVGLRPGEEKLVFSRFWRSDPSRVRRSGGTGLGLAISVEDARLHQGRLEAWGEPGEGACFRLTLPMVRGHKVTTSPLPMKPIPQPVLQPVAQPNPQPMPPEYKERQRPREHAEWSG.

Over residues 1–15 the composition is skewed to basic residues; the sequence is MIFGSRRRIRGRRGR. The interval 1–20 is disordered; the sequence is MIFGSRRRIRGRRGRSGPMT. A run of 2 helical transmembrane segments spans residues 42 to 62 and 213 to 233; these read VVAL…FVLT and GTMA…ALLV. In terms of domain architecture, HAMP spans 235 to 287; sequence RQVVVPVRSASRIAERFAEGHLSERMPVRGEDDMARLAVSFNDMAESLSRQIA. The 218-residue stretch at 302-519 folds into the Histidine kinase domain; it reads DVSHELRTPL…CFRLTLPMVR (218 aa). A Phosphohistidine; by autocatalysis modification is found at H305. Over residues 529–551 the composition is skewed to pro residues; sequence PMKPIPQPVLQPVAQPNPQPMPP. The disordered stretch occupies residues 529 to 567; that stretch reads PMKPIPQPVLQPVAQPNPQPMPPEYKERQRPREHAEWSG. A compositionally biased stretch (basic and acidic residues) spans 552-567; sequence EYKERQRPREHAEWSG.

Interacts with MrtA. Interacts with LpqB, probably extracytoplasmically via MtrB's sensor domain. Mg(2+) serves as cofactor. Ca(2+) is required as a cofactor. In terms of processing, the C-terminal domain (residues 234-567) autophosphorylates.

The protein localises to the cell membrane. It carries out the reaction ATP + protein L-histidine = ADP + protein N-phospho-L-histidine.. Ca(2+) ions inhibit the phosphotransfer from MtrB to MtrA. In terms of biological role, member of the two-component regulatory system MtrA/MtrB. Probably functions as a membrane-associated protein kinase that phosphorylates MtrA in response to environmental signals. Autophosphorylates and transfers phosphate to MtrA in vitro. Overexpression of MtrA alone decreases bacterial virulence in mouse infection; co-expression of MtrA and MtrB restores normal bacterial growth, suggesting that bacterial growth in macrophages requires an optimal ratio of MtrB to MtrA. Probably plays a role in cell division. This chain is Sensor histidine kinase MtrB (mtrB), found in Mycobacterium tuberculosis (strain ATCC 25618 / H37Rv).